The sequence spans 290 residues: Small ribosomal subunit biogenesis GTPase RsgA (290 aa).

In terms of domain architecture, CP-type G spans 62–213 (KNSLVRPPIV…IADTPGFSSL (152 aa)). GTP contacts are provided by residues 111-114 (SKTD) and 156-164 (GQTGVGKTT). Residues cysteine 237, cysteine 242, histidine 244, and cysteine 250 each coordinate Zn(2+).

The protein belongs to the TRAFAC class YlqF/YawG GTPase family. RsgA subfamily. In terms of assembly, monomer. Associates with 30S ribosomal subunit, binds 16S rRNA. Zn(2+) serves as cofactor.

It localises to the cytoplasm. One of several proteins that assist in the late maturation steps of the functional core of the 30S ribosomal subunit. Helps release RbfA from mature subunits. May play a role in the assembly of ribosomal proteins into the subunit. Circularly permuted GTPase that catalyzes slow GTP hydrolysis, GTPase activity is stimulated by the 30S ribosomal subunit. In Streptococcus mutans serotype c (strain ATCC 700610 / UA159), this protein is Small ribosomal subunit biogenesis GTPase RsgA.